The chain runs to 435 residues: Aspartate--tRNA(Asp/Asn) ligase (435 aa).

Glu-163 contributes to the L-aspartate binding site. The aspartate stretch occupies residues 185 to 188 (QLYK). Arg-206 contributes to the L-aspartate binding site. ATP contacts are provided by residues 206–208 (RAE), 214–216 (RHL), and Glu-358. L-aspartate contacts are provided by Ser-361 and Arg-365. 406–409 (GAER) contacts ATP.

It belongs to the class-II aminoacyl-tRNA synthetase family. Type 2 subfamily. As to quaternary structure, homodimer.

Its subcellular location is the cytoplasm. It catalyses the reaction tRNA(Asx) + L-aspartate + ATP = L-aspartyl-tRNA(Asx) + AMP + diphosphate. Its function is as follows. Aspartyl-tRNA synthetase with relaxed tRNA specificity since it is able to aspartylate not only its cognate tRNA(Asp) but also tRNA(Asn). Reaction proceeds in two steps: L-aspartate is first activated by ATP to form Asp-AMP and then transferred to the acceptor end of tRNA(Asp/Asn). Is slightly more efficient at aminoacylating tRNA(Asn) over tRNA(Asp). In Deinococcus radiodurans (strain ATCC 13939 / DSM 20539 / JCM 16871 / CCUG 27074 / LMG 4051 / NBRC 15346 / NCIMB 9279 / VKM B-1422 / R1), this protein is Aspartate--tRNA(Asp/Asn) ligase (aspS2).